Consider the following 360-residue polypeptide: Photosystem II protein D1 (360 aa).

3 helical membrane passes run 29–46, 118–133, and 142–156; these read YIGW…SAIA, HFLI…EWEL, and WICV…AATA. A chlorophyll a-binding site is contributed by histidine 118. Tyrosine 126 lines the pheophytin a pocket. Positions 170 and 189 each coordinate [CaMn4O5] cluster. The helical transmembrane segment at 197–218 threads the bilayer; it reads FHMLGVAGVFGGSLFSAMHGSL. Histidine 198 contacts chlorophyll a. A quinone contacts are provided by residues histidine 215 and 264–265; that span reads SF. Histidine 215 contributes to the Fe cation binding site. Residue histidine 272 coordinates Fe cation. Residues 274–288 traverse the membrane as a helical segment; the sequence is FLAAWPVIGIWFTAL. The [CaMn4O5] cluster site is built by histidine 332, glutamate 333, aspartate 342, and alanine 344. A propeptide spanning residues 345–360 is cleaved from the precursor; it reads AGDVAPVALTAPPING.

This sequence belongs to the reaction center PufL/M/PsbA/D family. As to quaternary structure, PSII is composed of 1 copy each of membrane proteins PsbA, PsbB, PsbC, PsbD, PsbE, PsbF, PsbH, PsbI, PsbJ, PsbK, PsbL, PsbM, PsbT, PsbX, PsbY, PsbZ, Psb30/Ycf12, peripheral proteins PsbO, CyanoQ (PsbQ), PsbU, PsbV and a large number of cofactors. It forms dimeric complexes. Requires The D1/D2 heterodimer binds P680, chlorophylls that are the primary electron donor of PSII, and subsequent electron acceptors. It shares a non-heme iron and each subunit binds pheophytin, quinone, additional chlorophylls, carotenoids and lipids. D1 provides most of the ligands for the Mn4-Ca-O5 cluster of the oxygen-evolving complex (OEC). There is also a Cl(-1) ion associated with D1 and D2, which is required for oxygen evolution. The PSII complex binds additional chlorophylls, carotenoids and specific lipids. as cofactor. Tyr-161 forms a radical intermediate that is referred to as redox-active TyrZ, YZ or Y-Z. Post-translationally, C-terminally processed by CtpA; processing is essential to allow assembly of the oxygen-evolving complex and thus photosynthetic growth.

The protein resides in the cellular thylakoid membrane. The enzyme catalyses 2 a plastoquinone + 4 hnu + 2 H2O = 2 a plastoquinol + O2. Functionally, photosystem II (PSII) is a light-driven water:plastoquinone oxidoreductase that uses light energy to abstract electrons from H(2)O, generating O(2) and a proton gradient subsequently used for ATP formation. It consists of a core antenna complex that captures photons, and an electron transfer chain that converts photonic excitation into a charge separation. The D1/D2 (PsbA/PsbD) reaction center heterodimer binds P680, the primary electron donor of PSII as well as several subsequent electron acceptors. The protein is Photosystem II protein D1 of Trichormus azollae (Anabaena azollae).